The following is a 421-amino-acid chain: Phosphoglycerate kinase (421 aa).

The (2R)-3-phosphoglycerate site is built by V23, D24, F25, N26, Q41, R42, S65, H66, G68, R69, L124, R125, H172, and R173. Position 216 (G216) interacts with ADP. G216 contributes to the CDP binding site. K218 is an AMP binding site. D221 is a CDP binding site. Position 221 (D221) interacts with Mg(2+). AMP is bound at residue K222. K222 lines the ATP pocket. G240 lines the ADP pocket. Residue G240 coordinates CDP. The AMP site is built by G241 and G315. Positions 241 and 315 each coordinate ATP. CDP-binding residues include G340 and F345. Position 345 (F345) interacts with ADP. Residue E346 coordinates AMP. Positions 346, 377, and 378 each coordinate ATP. D377 is a binding site for Mg(2+).

It belongs to the phosphoglycerate kinase family. As to quaternary structure, monomer. Mg(2+) serves as cofactor.

The protein resides in the cytoplasm. It localises to the mitochondrion. It catalyses the reaction (2R)-3-phosphoglycerate + ATP = (2R)-3-phospho-glyceroyl phosphate + ADP. It participates in carbohydrate degradation; glycolysis; pyruvate from D-glyceraldehyde 3-phosphate: step 2/5. In terms of biological role, catalyzes one of the two ATP producing reactions in the glycolytic pathway via the reversible conversion of 1,3-diphosphoglycerate to 3-phosphoglycerate. Both L- and D- forms of purine and pyrimidine nucleotides can be used as substrates, but the activity is much lower on pyrimidines. Negatively regulates the biosynthesis of acetyl-CoA from pyruvate in the mitochondrion. The polypeptide is Phosphoglycerate kinase (pgkA) (Emericella nidulans (strain FGSC A4 / ATCC 38163 / CBS 112.46 / NRRL 194 / M139) (Aspergillus nidulans)).